The chain runs to 346 residues: Coproporphyrin III ferrochelatase (346 aa).

Ser52 and Tyr121 together coordinate Fe-coproporphyrin III. Residues His181 and Glu264 each coordinate Fe(2+).

This sequence belongs to the ferrochelatase family.

The protein resides in the cytoplasm. It carries out the reaction Fe-coproporphyrin III + 2 H(+) = coproporphyrin III + Fe(2+). It functions in the pathway porphyrin-containing compound metabolism; protoheme biosynthesis. Involved in coproporphyrin-dependent heme b biosynthesis. Catalyzes the insertion of ferrous iron into coproporphyrin III to form Fe-coproporphyrin III. The polypeptide is Coproporphyrin III ferrochelatase (Mycobacterium sp. (strain JLS)).